We begin with the raw amino-acid sequence, 286 residues long: MEDKRRRARVQGAWAGPAKSQATAQPAPTAENNLQQRPGKAWMNKEQHLSDRQFVFKEPQEGVRRAPEPRVIEKEGVYEISMSPTGISRVCLCPGFVDLKEADSVFEQLCRDVPWKQRTGIRDDVTYQQPRLTAWYGELPYTYSRITMEPNPHWHPVLLMLKNQIEENTGHSFNSLLCNLYRNEKDSVDWHSDDEPSLGRCPIIASLSFGATRMFEMRKKPPPEDNGDYTYVERVKIPLDHGTLLIMEGATQADWQHRVPKEYHSREPRINLTFRTVYPDPRGAHW.

A disordered region spans residues 1 to 38; sequence MEDKRRRARVQGAWAGPAKSQATAQPAPTAENNLQQRP. The span at 20–36 shows a compositional bias: polar residues; it reads SQATAQPAPTAENNLQQ. Substrate is bound by residues tryptophan 115 and 141-143; that span reads YTY. A Fe2OG dioxygenase domain is found at 172–278; sequence SFNSLLCNLY…RINLTFRTVY (107 aa). Position 177 is a (4R)-5-hydroxyleucine; alternate (leucine 177). Leucine 177 is subject to (4R)-5-oxoleucine; alternate. Residue 179 to 181 participates in 2-oxoglutarate binding; it reads NLY. Fe cation is bound by residues histidine 191 and aspartate 193. Substrate is bound at residue aspartate 194. Histidine 257 contributes to the Fe cation binding site. 2-oxoglutarate-binding positions include 269 to 275 and arginine 275; that span reads RINLTFR.

It belongs to the alkB family. In terms of assembly, interacts with the ASCC complex composed of ASCC1, ASCC2 and ASCC3. Interacts directly with ASCC3, and is thereby recruited to the ASCC complex. Interacts with OTUD4; the interaction is direct. Interacts with USP7 and USP9X. Fe(2+) serves as cofactor. Post-translationally, ubiquitinated; undergoes 'Lys-48'-linked polyubiquitination. OTUD4 promotes USP7 and USP9X-dependent deubiquitination of 'Lys-48'-polyubiquitinated ALKBH3 promoting the repair of alkylated DNA lesions.

Its subcellular location is the nucleus. It localises to the cytoplasm. It catalyses the reaction an N(1)-methyladenosine in mRNA + 2-oxoglutarate + O2 = an adenosine in mRNA + formaldehyde + succinate + CO2. It carries out the reaction a methylated nucleobase within DNA + 2-oxoglutarate + O2 = a nucleobase within DNA + formaldehyde + succinate + CO2. The enzyme catalyses an N(1)-methyl-2'-deoxyadenosine in single-stranded DNA + 2-oxoglutarate + O2 = a 2'-deoxyadenosine in single-stranded DNA + formaldehyde + succinate + CO2 + H(+). The catalysed reaction is an N(3)-methyl-2'-deoxycytidine in single-stranded DNA + 2-oxoglutarate + O2 = a 2'-deoxycytidine in single-stranded DNA + formaldehyde + succinate + CO2 + H(+). It catalyses the reaction a 3,N(4)-etheno-2'-deoxycytidine in single-stranded DNA + 2-oxoglutarate + O2 + H2O = a 2'-deoxycytidine in single-stranded DNA + glyoxal + succinate + CO2. Activated by ascorbate. In terms of biological role, dioxygenase that mediates demethylation of DNA and RNA containing 1-methyladenosine (m1A). Repairs alkylated DNA containing 1-methyladenosine (m1A) and 3-methylcytosine (m3C) by oxidative demethylation. Has a strong preference for single-stranded DNA. Able to process alkylated m3C within double-stranded regions via its interaction with ASCC3, which promotes DNA unwinding to generate single-stranded substrate needed for ALKBH3. Can repair exocyclic 3,N4-ethenocytosine adducs in single-stranded DNA. Also acts on RNA. Demethylates N(1)-methyladenosine (m1A) RNA, an epigenetic internal modification of messenger RNAs (mRNAs) highly enriched within 5'-untranslated regions (UTRs) and in the vicinity of start codons. Requires molecular oxygen, alpha-ketoglutarate and iron. This is Alpha-ketoglutarate-dependent dioxygenase alkB homolog 3 from Bos taurus (Bovine).